Consider the following 87-residue polypeptide: Small ribosomal subunit protein bS20 (87 aa).

The interval 1 to 25 (MANTAQARKRARQSVQRNKHNSSLR) is disordered. The segment covering 7–22 (ARKRARQSVQRNKHNS) has biased composition (basic residues).

The protein belongs to the bacterial ribosomal protein bS20 family.

Binds directly to 16S ribosomal RNA. The chain is Small ribosomal subunit protein bS20 from Bordetella bronchiseptica (strain ATCC BAA-588 / NCTC 13252 / RB50) (Alcaligenes bronchisepticus).